The chain runs to 339 residues: Phenylalanine--tRNA ligase alpha subunit (339 aa).

Position 254 (E254) interacts with Mg(2+).

The protein belongs to the class-II aminoacyl-tRNA synthetase family. Phe-tRNA synthetase alpha subunit type 1 subfamily. As to quaternary structure, tetramer of two alpha and two beta subunits. Mg(2+) is required as a cofactor.

It is found in the cytoplasm. It catalyses the reaction tRNA(Phe) + L-phenylalanine + ATP = L-phenylalanyl-tRNA(Phe) + AMP + diphosphate + H(+). The polypeptide is Phenylalanine--tRNA ligase alpha subunit (Caldanaerobacter subterraneus subsp. tengcongensis (strain DSM 15242 / JCM 11007 / NBRC 100824 / MB4) (Thermoanaerobacter tengcongensis)).